Consider the following 520-residue polypeptide: Cytochrome P450 72A397 (520 aa).

The helical transmembrane segment at 14 to 34 threads the bilayer; the sequence is AVAVAVVVVGWAWKVLNWVWV. Cys-468 provides a ligand contact to heme.

The protein belongs to the cytochrome P450 family. Heme is required as a cofactor.

It localises to the membrane. The enzyme catalyses oleanolate + reduced [NADPH--hemoprotein reductase] + O2 = hederagenin + oxidized [NADPH--hemoprotein reductase] + H2O + H(+). In terms of biological role, catalyzes the oxidation of oleanolate at the C-23 position to form hederagenin. The sequence is that of Cytochrome P450 72A397 from Kalopanax septemlobus (Castor aralia).